The sequence spans 201 residues: Probable molybdenum cofactor guanylyltransferase (201 aa).

Residues 6–8 (LAG), lysine 18, aspartate 65, and aspartate 97 contribute to the GTP site. Aspartate 97 provides a ligand contact to Mg(2+).

It belongs to the MobA family. Mg(2+) serves as cofactor.

Its subcellular location is the cytoplasm. It catalyses the reaction Mo-molybdopterin + GTP + H(+) = Mo-molybdopterin guanine dinucleotide + diphosphate. Its function is as follows. Transfers a GMP moiety from GTP to Mo-molybdopterin (Mo-MPT) cofactor (Moco or molybdenum cofactor) to form Mo-molybdopterin guanine dinucleotide (Mo-MGD) cofactor. This Staphylococcus haemolyticus (strain JCSC1435) protein is Probable molybdenum cofactor guanylyltransferase.